The primary structure comprises 371 residues: uncharacterized protein (371 aa).

To A.pernix APE_1804 and S.solfataricus SSO2105.

This is an uncharacterized protein from Aeropyrum pernix (strain ATCC 700893 / DSM 11879 / JCM 9820 / NBRC 100138 / K1).